Reading from the N-terminus, the 596-residue chain is Bromodomain-containing protein 9 (596 aa).

A compositionally biased stretch (basic residues) spans 1-10 (MGKKHKKHKS). Disordered stretches follow at residues 1 to 31 (MGKK…QYYV) and 49 to 119 (EVTE…SEGE). Residues 61 to 73 (SFYEDRSDHERER) are compositionally biased toward basic and acidic residues. A compositionally biased stretch (basic residues) spans 74–84 (HKEKKKKKKKK). Residues 85–98 (SEKEKDKYLDEDER) are compositionally biased toward basic and acidic residues. Over residues 99 to 109 (RRRKEEKKRKR) the composition is skewed to basic residues. Residues 148–252 (NESTPLQQLL…HTGFKMMSKQ (105 aa)) enclose the Bromo domain. The tract at residues 226–228 (TYN) is histone H4K5ac H4K8ac and histone H4K5bu H4K8bu binding. Residues 537–547 (DFHDVHNDRGG) are compositionally biased toward basic and acidic residues. Positions 537-596 (DFHDVHNDRGGSRPSSSSSVSNNSERDHHLGSPSRISVGEQQDIHDPYEFLQSPETENQN) are disordered. Over residues 548–559 (SRPSSSSSVSNN) the composition is skewed to low complexity.

Binds acetylated histones H3 and H4. Binds butyrylated histone H4.

It is found in the nucleus. Plays a role in chromatin remodeling and regulation of transcription. Acts as a chromatin reader that recognizes and binds acylated histones: binds histones that are acetylated and/or butyrylated. This is Bromodomain-containing protein 9 (brd9) from Xenopus tropicalis (Western clawed frog).